A 283-amino-acid chain; its full sequence is Diaminopimelate epimerase (283 aa).

3 residues coordinate substrate: Asn-13, Gln-45, and Asn-65. The active-site Proton donor is Cys-74. Substrate is bound by residues 75–76 (GN), Asn-156, Asn-190, and 208–209 (ER). Cys-217 serves as the catalytic Proton acceptor. 218 to 219 (GS) serves as a coordination point for substrate.

It belongs to the diaminopimelate epimerase family. As to quaternary structure, homodimer.

It is found in the cytoplasm. It carries out the reaction (2S,6S)-2,6-diaminopimelate = meso-2,6-diaminopimelate. It functions in the pathway amino-acid biosynthesis; L-lysine biosynthesis via DAP pathway; DL-2,6-diaminopimelate from LL-2,6-diaminopimelate: step 1/1. Catalyzes the stereoinversion of LL-2,6-diaminopimelate (L,L-DAP) to meso-diaminopimelate (meso-DAP), a precursor of L-lysine and an essential component of the bacterial peptidoglycan. The protein is Diaminopimelate epimerase of Bartonella quintana (strain Toulouse) (Rochalimaea quintana).